The following is a 1352-amino-acid chain: Alpha-protein kinase 1 (1352 aa).

One can recognise an Arf-GAP domain in the interval 7–127; sequence DPNYGLLRSL…RWTSSLSTSD (121 aa). The C4-type zinc finger occupies 25–48; that stretch reads CAECNSANVPYVCIKLGVFICPTC. Disordered stretches follow at residues 123-164, 219-380, 424-445, 457-484, 503-560, and 619-658; these read LSTS…NNNN, TQSQ…PQHH, QQQQ…NSEP, HNHH…GNNS, FVEE…GGVS, and IINN…TNQN. The segment covering 237–246 has biased composition (polar residues); sequence GFSPFNSPRS. Low complexity-rich tracts occupy residues 268 to 287 and 298 to 318; these read NNSN…NNGN and NNNN…NNNN. 2 stretches are compositionally biased toward polar residues: residues 329–352 and 359–379; these read KTFS…SGNS and HPTQ…SPQH. A coiled-coil region spans residues 393-429; that stretch reads TTQQQLQQQQLQLQQQLQQQLQQQQQQQQQQQQQQQS. Basic residues-rich tracts occupy residues 458–470 and 510–523; these read NHHH…HHKQ and HQHP…RHHS. Over residues 619–636 the composition is skewed to low complexity; it reads IINNQNNQNNNNNNNTNN. A coiled-coil region spans residues 689-781; it reads YIQQQQQQQQ…QQQQQQHINL (93 aa). Disordered stretches follow at residues 786-863 and 901-979; these read PLQS…TDED and TSPI…PDAR. Positions 799–812 are enriched in polar residues; sequence PQHSSSQYMNQQGY. Positions 821–859 are enriched in low complexity; the sequence is QPQSPQQIQPQPLQQQIFQQVQQQQPQIPQQSPQPLQSS. A compositionally biased stretch (pro residues) spans 906–915; sequence QQPPQPPQPV. Residues 931 to 965 show a composition bias toward low complexity; it reads QQQNGPTVPQQQQQQQQQQQQQQQQQQQQQQQQQP. The 205-residue stretch at 990–1194 folds into the Alpha-type protein kinase domain; the sequence is RFDAKLGKWV…ICHYLGLSSV (205 aa). 1164-1169 contacts ATP; that stretch reads GKGNLG. 2 disordered regions span residues 1198–1234 and 1279–1352; these read PAND…SFNF and QQQQ…KLVS. The stretch at 1241–1320 forms a coiled coil; the sequence is HVLEQLNQQQ…QQQQQQQQNG (80 aa). A compositionally biased stretch (low complexity) spans 1279–1319; the sequence is QQQQQQQQQQQQQQQQNQQQNQQQNQQQQQQQQQQQQQQQN. Over residues 1321–1332 the composition is skewed to pro residues; that stretch reads HPPPQTPLPPTP. Over residues 1334 to 1352 the composition is skewed to basic and acidic residues; sequence QKDKPKIEVFGDILRKLVS.

It belongs to the protein kinase superfamily. Alpha-type protein kinase family. ALPK subfamily.

The sequence is that of Alpha-protein kinase 1 (ak1) from Dictyostelium discoideum (Social amoeba).